Consider the following 393-residue polypeptide: Lipid-A-disaccharide synthase (393 aa).

This sequence belongs to the LpxB family.

The catalysed reaction is a lipid X + a UDP-2-N,3-O-bis[(3R)-3-hydroxyacyl]-alpha-D-glucosamine = a lipid A disaccharide + UDP + H(+). It functions in the pathway bacterial outer membrane biogenesis; LPS lipid A biosynthesis. In terms of biological role, condensation of UDP-2,3-diacylglucosamine and 2,3-diacylglucosamine-1-phosphate to form lipid A disaccharide, a precursor of lipid A, a phosphorylated glycolipid that anchors the lipopolysaccharide to the outer membrane of the cell. In Actinobacillus pleuropneumoniae serotype 5b (strain L20), this protein is Lipid-A-disaccharide synthase.